The primary structure comprises 169 residues: Ribosome maturation factor RimM (169 aa).

The PRC barrel domain occupies 94–167 (ENEFYFHEII…KITIEVMEGL (74 aa)).

Belongs to the RimM family. Binds ribosomal protein uS19.

It is found in the cytoplasm. Functionally, an accessory protein needed during the final step in the assembly of 30S ribosomal subunit, possibly for assembly of the head region. Essential for efficient processing of 16S rRNA. May be needed both before and after RbfA during the maturation of 16S rRNA. It has affinity for free ribosomal 30S subunits but not for 70S ribosomes. The sequence is that of Ribosome maturation factor RimM from Listeria monocytogenes serotype 4b (strain F2365).